A 211-amino-acid chain; its full sequence is Beta-crystallin B3 (211 aa).

M1 carries the N-acetylmethionine modification. A2 is modified (N-acetylalanine; in Beta-crystallin B3, N-terminally processed). Residues 2–23 (AEQHGAPEQAAASKSHGGLGGS) are N-terminal arm. Beta/gamma crystallin 'Greek key' domains follow at residues 24-63 (YKVT…QVES) and 64-108 (GPWL…RPLH). Residues 109–113 (IDGPD) form a connecting peptide region. 2 Beta/gamma crystallin 'Greek key' domains span residues 114–155 (HKLH…RVIN) and 156–198 (GTWV…RRIR). The tract at residues 200 to 211 (QKWHKRGCFLSS) is C-terminal arm.

This sequence belongs to the beta/gamma-crystallin family. Homo/heterodimer, or complexes of higher-order. The structure of beta-crystallin oligomers seems to be stabilized through interactions between the N-terminal arms.

Functionally, crystallins are the dominant structural components of the vertebrate eye lens. This is Beta-crystallin B3 (Crybb3) from Rattus norvegicus (Rat).